The sequence spans 779 residues: Probable phosphoketolase 2 (779 aa).

Belongs to the XFP family. Thiamine diphosphate serves as cofactor.

The polypeptide is Probable phosphoketolase 2 (Rhizobium meliloti (strain 1021) (Ensifer meliloti)).